A 181-amino-acid chain; its full sequence is Large ribosomal subunit protein uL5c (181 aa).

It belongs to the universal ribosomal protein uL5 family. Part of the 50S ribosomal subunit; contacts the 5S rRNA.

It localises to the plastid. The protein localises to the chloroplast. In terms of biological role, binds 5S rRNA, forms part of the central protuberance of the 50S subunit. In Heterosigma akashiwo (strain NIES-293 / 8280G21-1), this protein is Large ribosomal subunit protein uL5c (rpl5).